Consider the following 195-residue polypeptide: dTTP/UTP pyrophosphatase (195 aa).

The active-site Proton acceptor is D73.

It belongs to the Maf family. YhdE subfamily. The cofactor is a divalent metal cation.

The protein resides in the cytoplasm. The enzyme catalyses dTTP + H2O = dTMP + diphosphate + H(+). It catalyses the reaction UTP + H2O = UMP + diphosphate + H(+). In terms of biological role, nucleoside triphosphate pyrophosphatase that hydrolyzes dTTP and UTP. May have a dual role in cell division arrest and in preventing the incorporation of modified nucleotides into cellular nucleic acids. This chain is dTTP/UTP pyrophosphatase, found in Exiguobacterium sibiricum (strain DSM 17290 / CCUG 55495 / CIP 109462 / JCM 13490 / 255-15).